A 301-amino-acid polypeptide reads, in one-letter code: MEGDFSVCRNCKRHVVSANFTLHEAYCLRFLVLCPECEEPVPKETMEEHCKLEHQQVGCTMCQQSMQKSSLEFHKANECQERPVECKFCKLDMQLSKLELHESYCGSRTELCQGCGQFIMHRMLAQHRDVCRSEQAQLGKGERISAPEREIYCHYCNQMIPENKYFHHMGKCCPDSEFKKHFPVGNPEILPSSLPSQAAENQTSTMEKDVRPKTRSINRFPLHSESSSKKAPRSKNKTLDPLLMSEPKPRTSSPRGDKAAYDILRRCSQCGILLPLPILNQHQEKCRWLASSKGKQVRNFS.

The TRAF-type zinc-finger motif lies at 22–99; it reads LHEAYCLRFL…KLDMQLSKLE (78 aa). The segment at 189-257 is disordered; that stretch reads ILPSSLPSQA…KPRTSSPRGD (69 aa). Residues 193–205 are compositionally biased toward polar residues; the sequence is SLPSQAAENQTST.

Interacts with BIRC4; the interaction is not detected in. Interacts with BIRC1, BIRC2, BIRC3, BIRC7 and BIRC8. Part of an complex consisting of BIRC4, XAF1 and BIRC5; the complex formation requires IFN-beta stimulation. Interacts with RNF114, the interaction increases XAF1 stability and proapoptotic effects, and may regulate IFN signaling. As to expression, widely expressed. Expression is frequently down-regulated in cancer cell lines. Isoform 5 is widely expressed. Expressed in placenta (at protein level).

It is found in the cytoplasm. It localises to the nucleus. The protein resides in the mitochondrion. In terms of biological role, seems to function as a negative regulator of members of the IAP (inhibitor of apoptosis protein) family. Inhibits anti-caspase activity of BIRC4. Induces cleavage and inactivation of BIRC4 independent of caspase activation. Mediates TNF-alpha-induced apoptosis and is involved in apoptosis in trophoblast cells. May inhibit BIRC4 indirectly by activating the mitochondrial apoptosis pathway. After translocation to mitochondria, promotes translocation of BAX to mitochondria and cytochrome c release from mitochondria. Seems to promote the redistribution of BIRC4 from the cytoplasm to the nucleus, probably independent of BIRC4 inactivation which seems to occur in the cytoplasm. The BIRC4-XAF1 complex mediates down-regulation of BIRC5/survivin; the process requires the E3 ligase activity of BIRC4. Seems to be involved in cellular sensitivity to the proapoptotic actions of TRAIL. May be a tumor suppressor by mediating apoptosis resistance of cancer cells. In Homo sapiens (Human), this protein is XIAP-associated factor 1 (XAF1).